The primary structure comprises 225 residues: ATP-dependent Clp protease proteolytic subunit (225 aa).

Serine 123 functions as the Nucleophile in the catalytic mechanism. Residue histidine 148 is part of the active site.

This sequence belongs to the peptidase S14 family. Fourteen ClpP subunits assemble into 2 heptameric rings which stack back to back to give a disk-like structure with a central cavity, resembling the structure of eukaryotic proteasomes.

The protein localises to the cytoplasm. The enzyme catalyses Hydrolysis of proteins to small peptides in the presence of ATP and magnesium. alpha-casein is the usual test substrate. In the absence of ATP, only oligopeptides shorter than five residues are hydrolyzed (such as succinyl-Leu-Tyr-|-NHMec, and Leu-Tyr-Leu-|-Tyr-Trp, in which cleavage of the -Tyr-|-Leu- and -Tyr-|-Trp bonds also occurs).. In terms of biological role, cleaves peptides in various proteins in a process that requires ATP hydrolysis. Has a chymotrypsin-like activity. Plays a major role in the degradation of misfolded proteins. The chain is ATP-dependent Clp protease proteolytic subunit from Chlorobium phaeovibrioides (strain DSM 265 / 1930) (Prosthecochloris vibrioformis (strain DSM 265)).